A 497-amino-acid chain; its full sequence is Acetyl-coenzyme A carboxylase carboxyl transferase subunit beta, chloroplastic (497 aa).

Residues 230 to 497 form the CoA carboxyltransferase N-terminal domain; that stretch reads LWVQCENCYG…FFPVNSNSIK (268 aa). 4 residues coordinate Zn(2+): Cys234, Cys237, Cys253, and Cys256. The C4-type zinc finger occupies 234-256; sequence CENCYGLNYKKFFRSKFNICEQC.

Belongs to the AccD/PCCB family. As to quaternary structure, acetyl-CoA carboxylase is a heterohexamer composed of biotin carboxyl carrier protein, biotin carboxylase and 2 subunits each of ACCase subunit alpha and ACCase plastid-coded subunit beta (accD). The cofactor is Zn(2+).

Its subcellular location is the plastid. The protein resides in the chloroplast stroma. The catalysed reaction is N(6)-carboxybiotinyl-L-lysyl-[protein] + acetyl-CoA = N(6)-biotinyl-L-lysyl-[protein] + malonyl-CoA. It functions in the pathway lipid metabolism; malonyl-CoA biosynthesis; malonyl-CoA from acetyl-CoA: step 1/1. In terms of biological role, component of the acetyl coenzyme A carboxylase (ACC) complex. Biotin carboxylase (BC) catalyzes the carboxylation of biotin on its carrier protein (BCCP) and then the CO(2) group is transferred by the transcarboxylase to acetyl-CoA to form malonyl-CoA. The sequence is that of Acetyl-coenzyme A carboxylase carboxyl transferase subunit beta, chloroplastic from Nandina domestica (Heavenly bamboo).